Consider the following 932-residue polypeptide: Probable serine/threonine-protein kinase clkA (932 aa).

Over residues 1-10 (MDRFQTKRKT) the composition is skewed to basic residues. Disordered stretches follow at residues 1-21 (MDRF…NNDY), 39-198 (YKNN…YGDT), and 212-562 (NDYD…TNTN). Low complexity-rich tracts occupy residues 11-21 (YSYNGYSNNDY) and 39-123 (YKNN…ENNY). Polar residues predominate over residues 124–143 (FQSENQSNKDQNSYFNSSYL). Low complexity-rich tracts occupy residues 148-196 (DNYN…NSYG), 218-305 (NNNN…NGGN), 314-342 (VFNN…NNDY), and 351-562 (NIYS…TNTN). The Protein kinase domain occupies 590–920 (YKVLCTVGSG…ASDALSHPFL (331 aa)). ATP is bound by residues 596-604 (VGSGTFSTV) and Lys-619. Asp-719 (proton acceptor) is an active-site residue.

Belongs to the protein kinase superfamily. CMGC Ser/Thr protein kinase family.

It catalyses the reaction L-seryl-[protein] + ATP = O-phospho-L-seryl-[protein] + ADP + H(+). The catalysed reaction is L-threonyl-[protein] + ATP = O-phospho-L-threonyl-[protein] + ADP + H(+). This is Probable serine/threonine-protein kinase clkA (clkA) from Dictyostelium discoideum (Social amoeba).